The sequence spans 328 residues: Tryptophan--tRNA ligase (328 aa).

ATP is bound by residues 9–11 and 17–18; these read QPS and GN. Positions 10–18 match the 'HIGH' region motif; it reads PSGVITIGN. L-tryptophan is bound at residue Asp-132. ATP-binding positions include 144–146, Ile-183, and 192–196; these read GED and KMSKS. Positions 192 to 196 match the 'KMSKS' region motif; sequence KMSKS.

The protein belongs to the class-I aminoacyl-tRNA synthetase family. As to quaternary structure, homodimer.

It is found in the cytoplasm. The catalysed reaction is tRNA(Trp) + L-tryptophan + ATP = L-tryptophyl-tRNA(Trp) + AMP + diphosphate + H(+). Inhibited by indolmycin, a competitive inhibitor for tryptophan. In terms of biological role, catalyzes the attachment of tryptophan to tRNA(Trp). This is Tryptophan--tRNA ligase from Geobacillus stearothermophilus (Bacillus stearothermophilus).